The sequence spans 117 residues: Large ribosomal subunit protein bL31B (117 aa).

Residues 75 to 117 (KRFERKKEASPADTPPESDSTTENASVEKKAEKKRVTAKGSKK) form a disordered region. The span at 100–109 (SVEKKAEKKR) shows a compositional bias: basic and acidic residues.

Belongs to the bacterial ribosomal protein bL31 family. Type B subfamily. As to quaternary structure, part of the 50S ribosomal subunit.

In Protochlamydia amoebophila (strain UWE25), this protein is Large ribosomal subunit protein bL31B.